The primary structure comprises 711 residues: MHWTSILSAILLFCLSGARASPAKTVIRNKVPLLVTNACTRIFQKVTWEYTSKSKRSSPVCSYEPAFQSMLYCIYETLDEKGYSNKTLEKTFSTIKKNCASYSDALQNMTNSEFYDVLNNGTRHMTPYVKGSANLTYPVEMDTQLRKAYYHALHGFYANLDVGNIYGGIICAYFVAIMAFAGVLHCMNYTPFKTVLLKQKLVGYVRGYLTLPTIGSKHASDFSYFRIFTGYLPTRLEGIIILGYLVLHTVFLAYGYEYDPENIIFKSRRVQVARYVADRSGVLAFAHFPLIVLFAGRNNFLEYISGVKYTSFIMFHKWLGRMMFLDAMIHGSAYTSYTVANKTWATSKNRLYWQFGVAALCLAGTMVFFSFAVFRKYFYEAFLFLHIVLGAMFFYACWEHVVSLSGIEWIYTAIAIWIVDRIIRIIKASYFGFPKASLQLIGDDLIRLTVKKPARPWRAKPGQYVFVSFLHPLYFWQSHPFTVLDSVSKNGELVIILKEKKGVTRLVKKYVCRNGGKTSMRLAIEGPYGSSSPVNNYNNVLLLTGGTGLPGPIAHAIKLGKTSAAAGKQSVKLVIAVRGFDVLEAYKPELMCLENLNVQLHIYNTMEVPSLTPSDSLDISQQDEKADEKGTVVATTLEKSANPLGFDGVVFHCGRPNVKELLHEAAELSGSLSVVCCGPPIFVDKVRNETAKIVLDKSAKAIEYFEEYQCW.

Residues 1–23 (MHWTSILSAILLFCLSGARASPA) form the signal peptide. The Extracellular portion of the chain corresponds to 24–164 (KTVIRNKVPL…GFYANLDVGN (141 aa)). Residues asparagine 85, asparagine 108, asparagine 120, and asparagine 134 are each glycosylated (N-linked (GlcNAc...) asparagine). Residues 165–185 (IYGGIICAYFVAIMAFAGVLH) form a helical membrane-spanning segment. The Cytoplasmic portion of the chain corresponds to 186–235 (CMNYTPFKTVLLKQKLVGYVRGYLTLPTIGSKHASDFSYFRIFTGYLPTR). A helical membrane pass occupies residues 236–256 (LEGIIILGYLVLHTVFLAYGY). The Extracellular segment spans residues 257–280 (EYDPENIIFKSRRVQVARYVADRS). In terms of domain architecture, Ferric oxidoreductase spans 280 to 414 (SGVLAFAHFP…SGIEWIYTAI (135 aa)). Residues 281–301 (GVLAFAHFPLIVLFAGRNNFL) form a helical membrane-spanning segment. Residues 302–317 (EYISGVKYTSFIMFHK) lie on the Cytoplasmic side of the membrane. Heme-binding residues include histidine 316 and histidine 330. The helical transmembrane segment at 318–340 (WLGRMMFLDAMIHGSAYTSYTVA) threads the bilayer. Asparagine 341 is a glycosylation site (N-linked (GlcNAc...) asparagine). Residues 341 to 353 (NKTWATSKNRLYW) lie on the Extracellular side of the membrane. Residues 354-374 (QFGVAALCLAGTMVFFSFAVF) traverse the membrane as a helical segment. Residues 375–377 (RKY) lie on the Cytoplasmic side of the membrane. A helical transmembrane segment spans residues 378-398 (FYEAFLFLHIVLGAMFFYACW). Heme is bound by residues histidine 386 and histidine 400. Residues 399–400 (EH) are Extracellular-facing. Residues 401 to 423 (VVSLSGIEWIYTAIAIWIVDRII) traverse the membrane as a helical segment. Residues 415–534 (AIWIVDRIIR…EGPYGSSSPV (120 aa)) enclose the FAD-binding FR-type domain. At 424 to 711 (RIIKASYFGF…IEYFEEYQCW (288 aa)) the chain is on the cytoplasmic side. Residue 479-485 (HPFTVLD) participates in FAD binding. Residues 526-529 (GPYG) and 677-678 (CG) contribute to the NADP(+) site.

Belongs to the ferric reductase (FRE) family. FAD serves as cofactor. It depends on heme as a cofactor.

Its subcellular location is the cell membrane. The enzyme catalyses 2 a Fe(II)-siderophore + NADP(+) + H(+) = 2 a Fe(III)-siderophore + NADPH. In terms of biological role, metalloreductase responsible for reducing extracellular iron and copper prior to import. Catalyzes the reductive uptake of Fe(3+)-salts and Fe(3+) bound to catecholate or hydroxamate siderophores. Fe(3+) is reduced to Fe(2+), which then dissociates from the siderophore and can be imported by the high-affinity Fe(2+) transport complex in the plasma membrane. Also participates in Cu(2+) reduction and Cu(+) uptake. The protein is Ferric/cupric reductase transmembrane component 2 (FRE2) of Saccharomyces cerevisiae (strain ATCC 204508 / S288c) (Baker's yeast).